The chain runs to 482 residues: UDP-N-acetylmuramoyl-L-alanyl-D-glutamate--2,6-diaminopimelate ligase 1 (482 aa).

Ser30 is a UDP-N-acetyl-alpha-D-muramoyl-L-alanyl-D-glutamate binding site. Position 110–116 (110–116 (GTNGKTT)) interacts with ATP. UDP-N-acetyl-alpha-D-muramoyl-L-alanyl-D-glutamate-binding positions include 152-153 (TT), Ser179, and Arg187. Lys219 bears the N6-carboxylysine mark. Residues Arg378, 402 to 405 (DNPR), Gly452, and Glu456 each bind meso-2,6-diaminopimelate. Positions 402–405 (DNPR) match the Meso-diaminopimelate recognition motif motif.

This sequence belongs to the MurCDEF family. MurE subfamily. Mg(2+) serves as cofactor. Post-translationally, carboxylation is probably crucial for Mg(2+) binding and, consequently, for the gamma-phosphate positioning of ATP.

It localises to the cytoplasm. It carries out the reaction UDP-N-acetyl-alpha-D-muramoyl-L-alanyl-D-glutamate + meso-2,6-diaminopimelate + ATP = UDP-N-acetyl-alpha-D-muramoyl-L-alanyl-gamma-D-glutamyl-meso-2,6-diaminopimelate + ADP + phosphate + H(+). Its pathway is cell wall biogenesis; peptidoglycan biosynthesis. In terms of biological role, catalyzes the addition of meso-diaminopimelic acid to the nucleotide precursor UDP-N-acetylmuramoyl-L-alanyl-D-glutamate (UMAG) in the biosynthesis of bacterial cell-wall peptidoglycan. This chain is UDP-N-acetylmuramoyl-L-alanyl-D-glutamate--2,6-diaminopimelate ligase 1, found in Clostridium acetobutylicum (strain ATCC 824 / DSM 792 / JCM 1419 / IAM 19013 / LMG 5710 / NBRC 13948 / NRRL B-527 / VKM B-1787 / 2291 / W).